The chain runs to 66 residues: UPF0150 protein AF_0072.1 (66 aa).

This sequence belongs to the UPF0150 family.

This is UPF0150 protein AF_0072.1 from Archaeoglobus fulgidus (strain ATCC 49558 / DSM 4304 / JCM 9628 / NBRC 100126 / VC-16).